The primary structure comprises 231 residues: Cutinase 2 (231 aa).

Residues 1–16 (MKFFALTTLLAATASA) form the signal peptide. A disulfide bond links Cys48 and Cys126. Catalysis depends on Ser137, which acts as the Nucleophile. A disulfide bridge links Cys188 with Cys195. Asp192 is a catalytic residue. The active-site Proton donor/acceptor is the His205.

The protein belongs to the cutinase family. Post-translationally, the 2 disulfide bonds play a critical role in holding the catalytic residues in juxta-position; reduction of the disulfide bridges results in the complete inactivation of the enzyme.

It is found in the secreted. The enzyme catalyses cutin + H2O = cutin monomers.. Its function is as follows. Catalyzes the hydrolysis of complex carboxylic polyesters found in the cell wall of plants. Degrades cutin, a macromolecule that forms the structure of the plant cuticle. Allows pathogenic fungi to penetrate through the cuticular barrier into the host plant during the initial stage of fungal infection. The sequence is that of Cutinase 2 (CUT2) from Fusarium vanettenii (Neocosmospora pisi).